The sequence spans 379 residues: Probable G-protein coupled receptor No18 (379 aa).

The Extracellular portion of the chain corresponds to 5–36 (EASITGRTAPELNASAAPLDDERELGETVAAT). The N-linked (GlcNAc...) asparagine glycan is linked to N17. The helical transmembrane segment at 37-58 (ALLLAIILVTIVGNSLVIISVF) threads the bilayer. The Cytoplasmic segment spans residues 59-68 (TYRPLRSVQN). A helical membrane pass occupies residues 69–90 (FFVVSLAVADLTVALFVLPLNV). At 91–107 (AYRLLNQWLLGSYLCQM) the chain is on the extracellular side. A disulfide bridge connects residues C105 and C184. The helical transmembrane segment at 108 to 128 (WLTCDILCCTSSILNLCVIAL) threads the bilayer. Topologically, residues 129 to 148 (DRYWAITDPINYAQKRTIRR) are cytoplasmic. Residues 149–171 (VNTMIAAVWALSLVISVPPLLGW) form a helical membrane-spanning segment. The Extracellular portion of the chain corresponds to 172–196 (NDWPAQFTEDTPCTLTQERLFVVYS). The chain crosses the membrane as a helical span at residues 197 to 218 (SSGSFFIPLIIMSVVYAKIFFA). Residues 219 to 303 (TKRRLRERTR…LSKERKAARV (85 aa)) are Cytoplasmic-facing. Positions 234–276 (AVPAPPQRTSSRPLAELESVASQEDETEPSPEPEPLSSRADKP) are disordered. A helical membrane pass occupies residues 304 to 325 (LGVIMGVFVVCWLPFFLMYAIV). Over 326–340 (PFCTNCAPPSQRVVD) the chain is Extracellular. The chain crosses the membrane as a helical span at residues 341–362 (FVTWLGYVNSSLNPIIYTIYNK). Residues 363 to 375 (DFRTAFSRLLRCD) are Cytoplasmic-facing.

It belongs to the G-protein coupled receptor 1 family.

It localises to the cell membrane. Its function is as follows. Probable G-protein coupled receptor for an amine. The polypeptide is Probable G-protein coupled receptor No18 (Amphibalanus amphitrite (Striped barnacle)).